The sequence spans 329 residues: NAC domain-containing protein 79 (329 aa).

Residues 17–167 (LPPGFRFHPT…EWVICRVFHK (151 aa)) form the NAC domain. A DNA-binding region spans residues 114-173 (VGMKKTLVFYRGRAPKGQKTNWVMHEYRLDGKLSAHNLPKTAKNEWVICRVFHKTAGGKK).

Expressed at low levels in leaves.

The protein localises to the nucleus. This is NAC domain-containing protein 79 from Arabidopsis thaliana (Mouse-ear cress).